We begin with the raw amino-acid sequence, 306 residues long: Eukaryotic translation initiation factor 2 subunit alpha (306 aa).

Residues 17-88 enclose the S1 motif domain; sequence DELVVVNVRQ…EKGYIDLSKR (72 aa). Ser52 is modified (phosphoserine). Thr179 is subject to Phosphothreonine. Phosphoserine occurs at positions 273, 295, 303, and 305.

Belongs to the eIF-2-alpha family. In terms of assembly, eukaryotic translation initiation factor 2 eIF2 is a heterotrimeric complex composed of an alpha, a beta and a gamma subunit.

It is found in the cytoplasm. The protein localises to the cytosol. In terms of biological role, eIF-2 functions in the early steps of protein synthesis by forming a ternary complex with GTP and initiator tRNA. This complex binds to a 40S ribosomal subunit, followed by mRNA binding to form a 43S pre-initiation complex. Junction of the 60S ribosomal subunit to form the 80S initiation complex is preceded by hydrolysis of the GTP bound to eIF-2 and release of an eIF-2-GDP binary complex. In order for eIF-2 to recycle and catalyze another round of initiation, the GDP bound to eIF-2 must exchange with GTP by way of a reaction catalyzed by eIF2B. The polypeptide is Eukaryotic translation initiation factor 2 subunit alpha (tif211) (Schizosaccharomyces pombe (strain 972 / ATCC 24843) (Fission yeast)).